The following is a 317-amino-acid chain: Taste receptor type 2 member 14 (317 aa).

Topologically, residues 1–7 (MGDVIKS) are extracellular. The helical transmembrane segment at 8–28 (IFTFVLIVEFIIGNLGNSFIA) threads the bilayer. The Cytoplasmic portion of the chain corresponds to 29 to 55 (LVNCIDWVKGRKISSVDQILTALAISR). The helical transmembrane segment at 56–76 (ISLVWLIFGSWCVSVFLPALF) threads the bilayer. The Extracellular segment spans residues 77 to 87 (ATEKMFRMLTN). Cholesterol contacts are provided by T86 and W89. The helical transmembrane segment at 88–108 (IWTVINHFSVWLATGLGTFYF) threads the bilayer. Topologically, residues 109 to 129 (LKIANFSNSIFLYLKWRVKKV) are cytoplasmic. Residues 130–150 (VLVLLLVTSVFLFLNIALINI) traverse the membrane as a helical segment. Residues 151–184 (HINASINGYRRNKTCSSDSSNFTRFSSLIVLTST) are Extracellular-facing. N-linked (GlcNAc...) asparagine glycans are attached at residues N153, N162, and N171. V180 is a cholesterol binding site. Residues 185-205 (VFIFIPFTLSLAMFLLLIFSL) traverse the membrane as a helical segment. Residues 206–232 (WKHRKKMQHXVKRSGDASTKAHRGVKS) are Cytoplasmic-facing. A helical transmembrane segment spans residues 233-253 (VITFFLLYAIFCLSFFISVWT). The Extracellular segment spans residues 254-261 (SERLEENL). Residues 262-282 (IILSQVMGMAYPSCHSCVLIL) traverse the membrane as a helical segment. Positions 265 and 268 each coordinate cholesterol. The Cytoplasmic portion of the chain corresponds to 283 to 317 (GNKKLRQASLSVLLWLRYMFKDGEPSGHKEFRESS).

Belongs to the G-protein coupled receptor T2R family. In terms of assembly, core component of the TAS2R14-GNAI1 complex, consisting of TAS2R14, GNAI1, GNB1 and GNG2; within the complex interacts with GNAI1. Core component of the TAS2R14-GNAT3 complex, consisting of TAS2R14, GNAT3, GNB1 and GNG2; within the complex interacts with GNAT3. Core component of the TAS2R14-GNAS2 complex, consisting of TAS2R14, GNAS2, GNB1 and GNG2; within the complex interacts with GNAS2.

It is found in the membrane. It carries out the reaction Ca(2+)(in) = Ca(2+)(out). The enzyme catalyses 3',5'-cyclic AMP(in) = 3',5'-cyclic AMP(out). With respect to regulation, basal activity is enhanced by binding to bitter tastants, such as flufenamic acid and aristolochic acid. Regulated by cholesterol in a concentration-dependent manner. Functionally, gustducin-linked G-protein coupled receptor that plays a role in the perception of bitterness. The activity of this receptor stimulates GNAT3, activating the gustducin G-protein pathway. Likely plays a role in sensing the chemical composition of the gastrointestinal content and other extra-oral tissues via the inhibitory G-protein pathways. The protein is Taste receptor type 2 member 14 (TAS2R14) of Gorilla gorilla gorilla (Western lowland gorilla).